The primary structure comprises 820 residues: Leucine-rich repeat and guanylate kinase domain-containing protein (820 aa).

Residues 72-83 are compositionally biased toward basic and acidic residues; that stretch reads EAEAEQEEKQQE. The tract at residues 72–96 is disordered; it reads EAEAEQEEKQQEDGESEESEESEMQ. Positions 84–94 are enriched in acidic residues; it reads DGESEESEESE. LRR repeat units lie at residues 129 to 149, 150 to 171, 172 to 193, 194 to 215, 216 to 237, 238 to 259, 260 to 280, 281 to 302, and 303 to 324; these read YLNL…CGYV, HLQK…SCMP, YLLE…KPPQ, NLKK…SAYH, TLTQ…ENCI, SLTH…GTLP, IKVL…EELK, ALQN…ENHD, and LLEV…EYIE. The region spanning 337-375 is the LRRCT domain; that stretch reads NPIQTKPEYWFFVIYMLLRLTELDQQKIKVEEKVFAVNK. The 184-residue stretch at 414-597 folds into the Guanylate kinase-like domain; the sequence is YPMLILTGPA…AYQKLSELIR (184 aa). Position 421 to 428 (421 to 428) interacts with ATP; that stretch reads GPAACGKR. A disordered region spans residues 800–820; that stretch reads TIMDPGSNTKPTLPPIPHGRR. Residues 811 to 820 are compositionally biased toward pro residues; that stretch reads TLPPIPHGRR.

In terms of assembly, interacts (via guanylate kinase-like domain) with RIMBP3 (via coiled-coil region). Interacts (via guanylate kinase-like domain) with HOOK2. Interacts (via LRRCT domain) with KLC3. Interacts with HOOK1 and HOOK3. As to expression, highly expressed in the testis. During spermatid development is initially localized to a supra-nuclear region of round spermatids, and is particularly evident at the leading edge of the developing acrosome and acroplaxome. As maturation proceeded and nuclear elongation initiated, LRGUK moves distally to ultimately reside on the microtubules of the manchette. LRGUK is also evident in the sperm basal body and the sperm tail.

Its subcellular location is the cytoplasmic vesicle. The protein localises to the secretory vesicle. The protein resides in the acrosome. It is found in the cytoplasm. It localises to the cytoskeleton. Its subcellular location is the cilium basal body. In terms of biological role, involved in multiple aspects of sperm assembly including acrosome attachment, shaping of the sperm head and in the early aspects of axoneme development. Not essential for primary cilium biogenesis. In Mus musculus (Mouse), this protein is Leucine-rich repeat and guanylate kinase domain-containing protein (Lrguk).